The sequence spans 146 residues: D-aminoacyl-tRNA deacylase (146 aa).

Residues 137 to 138 (GP) carry the Gly-cisPro motif, important for rejection of L-amino acids motif.

Belongs to the DTD family. In terms of assembly, homodimer.

It localises to the cytoplasm. The enzyme catalyses glycyl-tRNA(Ala) + H2O = tRNA(Ala) + glycine + H(+). The catalysed reaction is a D-aminoacyl-tRNA + H2O = a tRNA + a D-alpha-amino acid + H(+). Functionally, an aminoacyl-tRNA editing enzyme that deacylates mischarged D-aminoacyl-tRNAs. Also deacylates mischarged glycyl-tRNA(Ala), protecting cells against glycine mischarging by AlaRS. Acts via tRNA-based rather than protein-based catalysis; rejects L-amino acids rather than detecting D-amino acids in the active site. By recycling D-aminoacyl-tRNA to D-amino acids and free tRNA molecules, this enzyme counteracts the toxicity associated with the formation of D-aminoacyl-tRNA entities in vivo and helps enforce protein L-homochirality. This chain is D-aminoacyl-tRNA deacylase, found in Desulfatibacillum aliphaticivorans.